The primary structure comprises 115 residues: NADH-ubiquinone oxidoreductase chain 3 (115 aa).

Helical transmembrane passes span 4-24 (LLAMLINITLSLLLISIAFWL), 55-75 (FFLVAITFLLFDLEIALLLPI), and 87-107 (MMLTAFILVTILALGLAYEWI).

Belongs to the complex I subunit 3 family. In terms of assembly, core subunit of respiratory chain NADH dehydrogenase (Complex I) which is composed of 45 different subunits. Interacts with TMEM186. Interacts with TMEM242.

It localises to the mitochondrion inner membrane. The catalysed reaction is a ubiquinone + NADH + 5 H(+)(in) = a ubiquinol + NAD(+) + 4 H(+)(out). Its function is as follows. Core subunit of the mitochondrial membrane respiratory chain NADH dehydrogenase (Complex I) which catalyzes electron transfer from NADH through the respiratory chain, using ubiquinone as an electron acceptor. Essential for the catalytic activity of complex I. The sequence is that of NADH-ubiquinone oxidoreductase chain 3 from Neotoma floridana (Eastern woodrat).